Reading from the N-terminus, the 505-residue chain is MEEFQRHIELDRSWQHNFLYPLIFQEYIYAFAYDHGLNKSILLENSGNSKYSLLLVKRLITRMYQQNHLILSANDSNQNVILGHKHKKNLYSQMITEGFAVIVEVPFSLLLISSLGEKEIVKSHNLRSIHSIFPFLEDKLLHLNYVLDILITYPAHLEILVQTLRYWVKDASSLHLLRFFLYEYRNLNSLITPKELISFLKKRNQRLFLFLYNLHVCEYESLFVFLCNQSSYLRPTSFGALIERIYFCGKLKYLVKVFTKDFGVILWIFREPFPHYVRYQGKSILASKGTSLLMHKWKYYLIYFGQCHFSVWSQPKRLYINRLSNHSLDFMGFLSRVRLNSSVIRSQMLKNSFLIENISKKFDTVVPIIPLVGSLAKAKFCNVLGHPISKSVWTDLSDSDILDRFGRICRNISHYYSGSSRKKSLYRIKYILRLSCARTLSRKHKSTVRAFLKRLGSEFLEEFFTEEEKALSLILPRDSSISRGLYRGRIWYLDIICIHNLANDE.

This sequence belongs to the intron maturase 2 family. MatK subfamily.

The protein localises to the plastid. The protein resides in the chloroplast. Functionally, usually encoded in the trnK tRNA gene intron. Probably assists in splicing its own and other chloroplast group II introns. In Spinacia oleracea (Spinach), this protein is Maturase K.